A 375-amino-acid polypeptide reads, in one-letter code: Queuine tRNA-ribosyltransferase (375 aa).

Asp93 serves as the catalytic Proton acceptor. Residues 93 to 97, Asp147, Gln194, and Gly221 contribute to the substrate site; that span reads DSGGY. Residues 252-258 form an RNA binding region; it reads GVGKPDD. The Nucleophile role is filled by Asp271. The segment at 276–280 is RNA binding; important for wobble base 34 recognition; that stretch reads TRSGR. Cys309, Cys311, Cys314, and His340 together coordinate Zn(2+).

The protein belongs to the queuine tRNA-ribosyltransferase family. Homodimer. Within each dimer, one monomer is responsible for RNA recognition and catalysis, while the other monomer binds to the replacement base PreQ1. Requires Zn(2+) as cofactor.

It carries out the reaction 7-aminomethyl-7-carbaguanine + guanosine(34) in tRNA = 7-aminomethyl-7-carbaguanosine(34) in tRNA + guanine. Its pathway is tRNA modification; tRNA-queuosine biosynthesis. In terms of biological role, catalyzes the base-exchange of a guanine (G) residue with the queuine precursor 7-aminomethyl-7-deazaguanine (PreQ1) at position 34 (anticodon wobble position) in tRNAs with GU(N) anticodons (tRNA-Asp, -Asn, -His and -Tyr). Catalysis occurs through a double-displacement mechanism. The nucleophile active site attacks the C1' of nucleotide 34 to detach the guanine base from the RNA, forming a covalent enzyme-RNA intermediate. The proton acceptor active site deprotonates the incoming PreQ1, allowing a nucleophilic attack on the C1' of the ribose to form the product. After dissociation, two additional enzymatic reactions on the tRNA convert PreQ1 to queuine (Q), resulting in the hypermodified nucleoside queuosine (7-(((4,5-cis-dihydroxy-2-cyclopenten-1-yl)amino)methyl)-7-deazaguanosine). The sequence is that of Queuine tRNA-ribosyltransferase from Sphingopyxis alaskensis (strain DSM 13593 / LMG 18877 / RB2256) (Sphingomonas alaskensis).